Here is a 421-residue protein sequence, read N- to C-terminus: Accessory Sec system protein translocase subunit SecY2 (421 aa).

Transmembrane regions (helical) follow at residues 17–37 (LWTS…IPGV), 69–89 (FALG…LTLI), 102–122 (TFLF…IAII), 139–159 (FGAM…LVWL), 165–185 (ILGI…NWPT), 204–224 (VILM…TVVV), 254–274 (PAGG…QYIL), 299–319 (PLGV…FAFI), 358–378 (SFVG…FGII), and 383–403 (TQYA…INII).

The protein belongs to the SecY/SEC61-alpha family. SecY2 subfamily. Component of the accessory SecA2/SecY2 protein translocase complex required to export cell wall proteins. May form heterotrimers with SecE and SecG subunits.

The protein localises to the cell membrane. In terms of biological role, part of the accessory SecA2/SecY2 system specifically required for export of possible cell wall proteins. The central subunit of a protein translocation channel. The chain is Accessory Sec system protein translocase subunit SecY2 from Leuconostoc gelidum subsp. gasicomitatum (strain DSM 15947 / CCUG 46042 / CECT 5767 / JCM 12535 / LMG 18811 / NBRC 113245 / TB1-10) (Leuconostoc gasicomitatum).